The sequence spans 400 residues: Queuine tRNA-ribosyltransferase (400 aa).

The Proton acceptor role is filled by D93. Residues 93–97 (DSGGF), D166, and G247 each bind substrate. The tract at residues 277 to 283 (GIGDVDD) is RNA binding. The active-site Nucleophile is the D296. The interval 301–305 (TRLGR) is RNA binding; important for wobble base 34 recognition. Residues C338, C340, C343, and H369 each contribute to the Zn(2+) site.

This sequence belongs to the queuine tRNA-ribosyltransferase family. Homodimer. Within each dimer, one monomer is responsible for RNA recognition and catalysis, while the other monomer binds to the replacement base PreQ1. Requires Zn(2+) as cofactor.

It carries out the reaction 7-aminomethyl-7-carbaguanine + guanosine(34) in tRNA = 7-aminomethyl-7-carbaguanosine(34) in tRNA + guanine. The protein operates within tRNA modification; tRNA-queuosine biosynthesis. Catalyzes the base-exchange of a guanine (G) residue with the queuine precursor 7-aminomethyl-7-deazaguanine (PreQ1) at position 34 (anticodon wobble position) in tRNAs with GU(N) anticodons (tRNA-Asp, -Asn, -His and -Tyr). Catalysis occurs through a double-displacement mechanism. The nucleophile active site attacks the C1' of nucleotide 34 to detach the guanine base from the RNA, forming a covalent enzyme-RNA intermediate. The proton acceptor active site deprotonates the incoming PreQ1, allowing a nucleophilic attack on the C1' of the ribose to form the product. After dissociation, two additional enzymatic reactions on the tRNA convert PreQ1 to queuine (Q), resulting in the hypermodified nucleoside queuosine (7-(((4,5-cis-dihydroxy-2-cyclopenten-1-yl)amino)methyl)-7-deazaguanosine). In Roseiflexus sp. (strain RS-1), this protein is Queuine tRNA-ribosyltransferase.